The chain runs to 401 residues: Imidazolonepropionase (401 aa).

Fe(3+) is bound by residues H66 and H68. Zn(2+)-binding residues include H66 and H68. The 4-imidazolone-5-propanoate site is built by R75, Y138, and H171. Y138 provides a ligand contact to N-formimidoyl-L-glutamate. A Fe(3+)-binding site is contributed by H236. Residue H236 coordinates Zn(2+). Q239 lines the 4-imidazolone-5-propanoate pocket. D311 is a binding site for Fe(3+). Zn(2+) is bound at residue D311. N-formimidoyl-L-glutamate is bound by residues N313 and G315. T316 is a binding site for 4-imidazolone-5-propanoate.

Belongs to the metallo-dependent hydrolases superfamily. HutI family. It depends on Zn(2+) as a cofactor. The cofactor is Fe(3+).

The protein localises to the cytoplasm. It carries out the reaction 4-imidazolone-5-propanoate + H2O = N-formimidoyl-L-glutamate. The protein operates within amino-acid degradation; L-histidine degradation into L-glutamate; N-formimidoyl-L-glutamate from L-histidine: step 3/3. In terms of biological role, catalyzes the hydrolytic cleavage of the carbon-nitrogen bond in imidazolone-5-propanoate to yield N-formimidoyl-L-glutamate. It is the third step in the universal histidine degradation pathway. This is Imidazolonepropionase from Pseudomonas fluorescens (strain Pf0-1).